We begin with the raw amino-acid sequence, 1296 residues long: Phosphoribosylformylglycinamidine synthase (1296 aa).

Residues 304–323 (WPGAATGSGGEIRDEGATGR) form a disordered region. Residues 306–317 (GAATGSGGEIRD) and Ala-677 contribute to the ATP site. 4 residues coordinate Mg(2+): Asp-678, Glu-717, Asn-721, and Asp-885. Ser-887 serves as a coordination point for ATP. Residues 1000 to 1013 (PDCADQEHQAKQDE) are compositionally biased toward basic and acidic residues. A disordered region spans residues 1000 to 1019 (PDCADQEHQAKQDESDPGLN). In terms of domain architecture, Glutamine amidotransferase type-1 spans 1043 to 1296 (VAVLREQGVN…MFRNARKQLG (254 aa)). Catalysis depends on Cys-1136, which acts as the Nucleophile. Residues His-1261 and Glu-1263 contribute to the active site.

This sequence in the N-terminal section; belongs to the FGAMS family. As to quaternary structure, monomer.

It localises to the cytoplasm. The catalysed reaction is N(2)-formyl-N(1)-(5-phospho-beta-D-ribosyl)glycinamide + L-glutamine + ATP + H2O = 2-formamido-N(1)-(5-O-phospho-beta-D-ribosyl)acetamidine + L-glutamate + ADP + phosphate + H(+). The protein operates within purine metabolism; IMP biosynthesis via de novo pathway; 5-amino-1-(5-phospho-D-ribosyl)imidazole from N(2)-formyl-N(1)-(5-phospho-D-ribosyl)glycinamide: step 1/2. Functionally, phosphoribosylformylglycinamidine synthase involved in the purines biosynthetic pathway. Catalyzes the ATP-dependent conversion of formylglycinamide ribonucleotide (FGAR) and glutamine to yield formylglycinamidine ribonucleotide (FGAM) and glutamate. The chain is Phosphoribosylformylglycinamidine synthase from Yersinia pestis bv. Antiqua (strain Nepal516).